We begin with the raw amino-acid sequence, 137 residues long: Methylglyoxal synthase (137 aa).

The MGS-like domain occupies 1-137 (MNIALVAHDQ…EVRKSKSQRI (137 aa)). Residues His8, Lys12, 34 to 37 (TGTT), and 54 to 55 (SG) contribute to the substrate site. The active-site Proton donor/acceptor is the Asp60. His87 contacts substrate.

This sequence belongs to the methylglyoxal synthase family.

It carries out the reaction dihydroxyacetone phosphate = methylglyoxal + phosphate. Catalyzes the formation of methylglyoxal from dihydroxyacetone phosphate. The protein is Methylglyoxal synthase of Clostridioides difficile (strain 630) (Peptoclostridium difficile).